A 107-amino-acid chain; its full sequence is Apolipoprotein E (107 aa).

Repeat copies occupy residues 11–32 (ALMD…EQLS), 33–54 (PVAE…ARLG), 55–76 (ADME…AMLG), 77–98 (QSTD…KRLL), and 99–107 (RDVDDLQKR). Residues 11 to 107 (ALMDETMKEL…LRDVDDLQKR (97 aa)) form a 5 X 22 AA approximate tandem repeats region. Met74 is modified (methionine sulfoxide). Ser78 carries the phosphoserine modification. The interval 89–99 (HLRKLRKRLLR) is LDL and other lipoprotein receptors binding. 93–96 (LRKR) lines the heparin pocket.

This sequence belongs to the apolipoprotein A1/A4/E family. In terms of assembly, homotetramer. May interact with ABCA1; functionally associated with ABCA1 in the biogenesis of HDLs. May interact with APP/A4 amyloid-beta peptide; the interaction is extremely stable in vitro but its physiological significance is unclear. May interact with MAPT. May interact with MAP2. In the cerebrospinal fluid, interacts with secreted SORL1. Interacts with PMEL; this allows the loading of PMEL luminal fragment on ILVs to induce fibril nucleation. Post-translationally, APOE exists as multiple glycosylated and sialylated glycoforms within cells and in plasma. The extent of glycosylation and sialylation are tissue and context specific. Glycated in plasma VLDL. In terms of processing, phosphorylated by FAM20C in the extracellular medium.

It localises to the secreted. Its subcellular location is the extracellular space. The protein localises to the extracellular matrix. It is found in the extracellular vesicle. The protein resides in the endosome. It localises to the multivesicular body. Functionally, APOE is an apolipoprotein, a protein associating with lipid particles, that mainly functions in lipoprotein-mediated lipid transport between organs via the plasma and interstitial fluids. APOE is a core component of plasma lipoproteins and is involved in their production, conversion and clearance. Apolipoproteins are amphipathic molecules that interact both with lipids of the lipoprotein particle core and the aqueous environment of the plasma. As such, APOE associates with chylomicrons, chylomicron remnants, very low density lipoproteins (VLDL) and intermediate density lipoproteins (IDL) but shows a preferential binding to high-density lipoproteins (HDL). It also binds a wide range of cellular receptors including the LDL receptor/LDLR, the LDL receptor-related proteins LRP1, LRP2 and LRP8 and the very low-density lipoprotein receptor/VLDLR that mediate the cellular uptake of the APOE-containing lipoprotein particles. Finally, APOE also has a heparin-binding activity and binds heparan-sulfate proteoglycans on the surface of cells, a property that supports the capture and the receptor-mediated uptake of APOE-containing lipoproteins by cells. A main function of APOE is to mediate lipoprotein clearance through the uptake of chylomicrons, VLDLs, and HDLs by hepatocytes. APOE is also involved in the biosynthesis by the liver of VLDLs as well as their uptake by peripheral tissues ensuring the delivery of triglycerides and energy storage in muscle, heart and adipose tissues. By participating in the lipoprotein-mediated distribution of lipids among tissues, APOE plays a critical role in plasma and tissues lipid homeostasis. APOE is also involved in two steps of reverse cholesterol transport, the HDLs-mediated transport of cholesterol from peripheral tissues to the liver, and thereby plays an important role in cholesterol homeostasis. First, it is functionally associated with ABCA1 in the biogenesis of HDLs in tissues. Second, it is enriched in circulating HDLs and mediates their uptake by hepatocytes. APOE also plays an important role in lipid transport in the central nervous system, regulating neuron survival and sprouting. This chain is Apolipoprotein E (APOE), found in Saimiri sciureus (Common squirrel monkey).